The sequence spans 459 residues: Ribulose bisphosphate carboxylase large chain (459 aa).

Lys4 is modified (N6,N6,N6-trimethyllysine). Substrate is bound by residues Asn113 and Thr163. Lys165 acts as the Proton acceptor in catalysis. Lys167 provides a ligand contact to substrate. The Mg(2+) site is built by Lys191, Asp193, and Glu194. Lys191 is modified (N6-carboxylysine). His284 (proton acceptor) is an active-site residue. Residues Arg285, His317, and Ser369 each contribute to the substrate site.

It belongs to the RuBisCO large chain family. Type I subfamily. In terms of assembly, heterohexadecamer of 8 large chains and 8 small chains; disulfide-linked. The disulfide link is formed within the large subunit homodimers. Requires Mg(2+) as cofactor. The disulfide bond which can form in the large chain dimeric partners within the hexadecamer appears to be associated with oxidative stress and protein turnover.

The protein resides in the plastid. The protein localises to the chloroplast. The catalysed reaction is 2 (2R)-3-phosphoglycerate + 2 H(+) = D-ribulose 1,5-bisphosphate + CO2 + H2O. The enzyme catalyses D-ribulose 1,5-bisphosphate + O2 = 2-phosphoglycolate + (2R)-3-phosphoglycerate + 2 H(+). In terms of biological role, ruBisCO catalyzes two reactions: the carboxylation of D-ribulose 1,5-bisphosphate, the primary event in carbon dioxide fixation, as well as the oxidative fragmentation of the pentose substrate in the photorespiration process. Both reactions occur simultaneously and in competition at the same active site. This Morus alba (White mulberry) protein is Ribulose bisphosphate carboxylase large chain.